The sequence spans 291 residues: Ecto-ADP-ribosyltransferase 5 (291 aa).

The N-terminal stretch at 1 to 22 is a signal peptide; the sequence is MALAALMIALGSLGLHTWQAQA. Cysteine 42 and cysteine 258 are disulfide-bonded. The TR mART core domain occupies 62–252; that stretch reads ALLRESWEAA…LVTLWSYNQT (191 aa). Tyrosine 99 contacts NAD(+). N-linked (GlcNAc...) asparagine glycosylation occurs at asparagine 101. NAD(+)-binding residues include arginine 160 and glutamine 180. The active site involves arginine 160. Residue serine 183 is part of the active site. Residue asparagine 196 is glycosylated (N-linked (GlcNAc...) asparagine). Residue serine 214 coordinates NAD(+). Glutamate 221 is a catalytic residue. Asparagine 250 carries an N-linked (GlcNAc...) asparagine glycan.

The protein belongs to the Arg-specific ADP-ribosyltransferase family.

It is found in the secreted. The enzyme catalyses L-arginyl-[protein] + NAD(+) = N(omega)-(ADP-D-ribosyl)-L-arginyl-[protein] + nicotinamide + H(+). This is Ecto-ADP-ribosyltransferase 5 (ART5) from Homo sapiens (Human).